A 673-amino-acid polypeptide reads, in one-letter code: UvrABC system protein B (673 aa).

A Helicase ATP-binding domain is found at 26-183 (EGLEDGLAHQ…RRLAELQYTR (158 aa)). 39–46 (GVTGSGKT) contributes to the ATP binding site. The Beta-hairpin motif lies at 92–115 (YYDYYQPEAYVPSSDTFIEKDASV). The 167-residue stretch at 431–597 (QVDDLLSEIR…GLNKKVVDIL (167 aa)) folds into the Helicase C-terminal domain. In terms of domain architecture, UVR spans 633 to 668 (QQKIHELEGQMMQHAQNLEFEEAAQIRDQLHQLREL).

Belongs to the UvrB family. In terms of assembly, forms a heterotetramer with UvrA during the search for lesions. Interacts with UvrC in an incision complex.

It is found in the cytoplasm. In terms of biological role, the UvrABC repair system catalyzes the recognition and processing of DNA lesions. A damage recognition complex composed of 2 UvrA and 2 UvrB subunits scans DNA for abnormalities. Upon binding of the UvrA(2)B(2) complex to a putative damaged site, the DNA wraps around one UvrB monomer. DNA wrap is dependent on ATP binding by UvrB and probably causes local melting of the DNA helix, facilitating insertion of UvrB beta-hairpin between the DNA strands. Then UvrB probes one DNA strand for the presence of a lesion. If a lesion is found the UvrA subunits dissociate and the UvrB-DNA preincision complex is formed. This complex is subsequently bound by UvrC and the second UvrB is released. If no lesion is found, the DNA wraps around the other UvrB subunit that will check the other stand for damage. This chain is UvrABC system protein B, found in Klebsiella pneumoniae (strain 342).